We begin with the raw amino-acid sequence, 678 residues long: MGHSDGDHGSDLSADDSPWSEGSWSDDDDEGSLSFEDSGEGSDAESDEPDAPAVEESDSSEDEVAPRNTIGDVPLEWYKNEEHIGYDITGSKIKKRDREGRIEAYLRNADDAKNWRKIYDEYNDEEVQITKEEAKIISRLLKGKTPHTNVDPYPDYVDWFEYDGKGHPLSSAPEPKRRFVPSRWEQKKVVKLVRAIRKGWIKFDKPKEEPNFYLLWGDETDTADNKRQGLSYIPAPKPNLPGHEESYNPSVEYIPTQEEIDSYQLMYEEDRPKFIPRKFDCLRSVPAYEKALREGFDRCLDLYLCPRTRKKRINIDPESLKPKLPSKKDLRPYPRTCYLEFKGHNGPVKSLSVEATGQWIASGSSDGTIRVWEVETGRCIKVWNVGGVVHRIAWNPSPDRHILAAVVDHDLLLLNAEVGDEDAQMKTKGLLQIEELAQEEDNGDKKPAVKWVKHEKFDGIMLIHHKAVSTVEWHFKGDYFTTVVPSGDSRAVLLHQLSKKHSHHPFRKLPGLPIAAVFHPSQKMFFVATKKFVQVYDLQKAQLVKKLESGVREISSISIHPGGDNVIVGSKDGKLCWFDTDLSTRPYKTLKNHSKDITNVTFHRKYPLFASSSEDCTAYVFHGMVYSDLNQNPLIVPLEILRGHSSSDGRGVLDCKFHPRQPWLFTAGADSVVRLYCD.

Residues 1 to 10 are compositionally biased toward basic and acidic residues; it reads MGHSDGDHGS. The interval 1-73 is disordered; that stretch reads MGHSDGDHGS…VAPRNTIGDV (73 aa). Acidic residues predominate over residues 24–63; it reads WSDDDDEGSLSFEDSGEGSDAESDEPDAPAVEESDSSEDE. WD repeat units follow at residues 343-384, 386-424, 463-505, 508-548, 549-588, 592-631, and 647-678; these read GHNG…KVWN, GGVVHRIAWNPSPDRHILAAVVDHDLLLLNAEVGDEDAQ, IHHK…SHHP, KLPG…KKLE, SGVREISSISIHPGGDNVIVGSKDGKLCWFDTDLSTRPYK, NHSKDITNVTFHRKYPLFASSSEDCTAYVFHGMVYSDLNQ, and SDGRGVLDCKFHPRQPWLFTAGADSVVRLYCD.

It belongs to the WD repeat BOP1/ERB1 family.

Its subcellular location is the nucleus. It is found in the nucleolus. It localises to the nucleoplasm. In terms of biological role, required for maturation of ribosomal RNAs and formation of the large ribosomal subunit. This is Ribosome biogenesis protein BOP1 homolog from Oryza sativa subsp. japonica (Rice).